A 380-amino-acid chain; its full sequence is tRNA-specific 2-thiouridylase MnmA (380 aa).

Residues 25-32 (AMSGGVDS) and M51 each bind ATP. C119 acts as the Nucleophile in catalysis. A disulfide bridge links C119 with C216. ATP is bound at residue G143. The interval 166 to 168 (KDQ) is interaction with tRNA. The active-site Cysteine persulfide intermediate is C216. The interval 320 to 321 (RY) is interaction with tRNA.

Belongs to the MnmA/TRMU family.

It is found in the cytoplasm. It carries out the reaction S-sulfanyl-L-cysteinyl-[protein] + uridine(34) in tRNA + AH2 + ATP = 2-thiouridine(34) in tRNA + L-cysteinyl-[protein] + A + AMP + diphosphate + H(+). Catalyzes the 2-thiolation of uridine at the wobble position (U34) of tRNA, leading to the formation of s(2)U34. This chain is tRNA-specific 2-thiouridylase MnmA, found in Deinococcus radiodurans (strain ATCC 13939 / DSM 20539 / JCM 16871 / CCUG 27074 / LMG 4051 / NBRC 15346 / NCIMB 9279 / VKM B-1422 / R1).